The primary structure comprises 129 residues: Small ribosomal subunit protein uS11 (129 aa).

This sequence belongs to the universal ribosomal protein uS11 family. As to quaternary structure, part of the 30S ribosomal subunit. Interacts with proteins S7 and S18. Binds to IF-3.

Functionally, located on the platform of the 30S subunit, it bridges several disparate RNA helices of the 16S rRNA. Forms part of the Shine-Dalgarno cleft in the 70S ribosome. This chain is Small ribosomal subunit protein uS11, found in Bartonella quintana (strain Toulouse) (Rochalimaea quintana).